The chain runs to 61 residues: MATVAMINKAKATPKYATRRYNRCGVCGRPRGYMRRFQLCRLCFRKLASEGQIPGVTKSSW.

Positions 24, 27, 40, and 43 each coordinate Zn(2+).

The protein belongs to the universal ribosomal protein uS14 family. Zinc-binding uS14 subfamily. As to quaternary structure, part of the 30S ribosomal subunit. Contacts proteins S3 and S10. Zn(2+) serves as cofactor.

In terms of biological role, binds 16S rRNA, required for the assembly of 30S particles and may also be responsible for determining the conformation of the 16S rRNA at the A site. This Treponema pallidum (strain Nichols) protein is Small ribosomal subunit protein uS14.